Here is a 761-residue protein sequence, read N- to C-terminus: Putative pentatricopeptide repeat-containing protein At2g02150 (761 aa).

17 PPR repeats span residues 141–175, 191–225, 226–260, 261–295, 296–330, 331–365, 366–400, 401–435, 436–470, 471–505, 506–540, 541–575, 576–606, 612–646, 647–681, 682–716, and 717–751; these read SVES…KADC, GFGV…RVFP, KTRS…GARP, TVFT…GLVP, DTVT…CCEP, DVIT…GLKP, NVVS…GLVP, NEYT…GVEW, NVVT…GVIP, NLAS…GIKP, DLLL…GIKA, NSLI…DIEV, TVVT…ISND, NAAI…GLVP, DRTA…GMKL, DLLA…GIHP, and DEVL…QLLT.

It belongs to the PPR family. P subfamily.

In Arabidopsis thaliana (Mouse-ear cress), this protein is Putative pentatricopeptide repeat-containing protein At2g02150.